Consider the following 199-residue polypeptide: Large ribosomal subunit protein bL25 (199 aa).

Belongs to the bacterial ribosomal protein bL25 family. CTC subfamily. In terms of assembly, part of the 50S ribosomal subunit; part of the 5S rRNA/L5/L18/L25 subcomplex. Contacts the 5S rRNA. Binds to the 5S rRNA independently of L5 and L18.

This is one of the proteins that binds to the 5S RNA in the ribosome where it forms part of the central protuberance. The protein is Large ribosomal subunit protein bL25 of Pseudomonas fluorescens (strain ATCC BAA-477 / NRRL B-23932 / Pf-5).